A 29-amino-acid chain; its full sequence is Glucagon (29 aa).

It belongs to the glucagon family.

The protein resides in the secreted. Its function is as follows. Glucagon plays a key role in glucose metabolism and homeostasis. Regulates blood glucose by increasing gluconeogenesis and decreasing glycolysis. This is Glucagon (GCG) from Struthio camelus (Common ostrich).